The chain runs to 101 residues: Urease subunit beta (101 aa).

The protein belongs to the urease beta subunit family. In terms of assembly, heterotrimer of UreA (gamma), UreB (beta) and UreC (alpha) subunits. Three heterotrimers associate to form the active enzyme.

The protein localises to the cytoplasm. It carries out the reaction urea + 2 H2O + H(+) = hydrogencarbonate + 2 NH4(+). It functions in the pathway nitrogen metabolism; urea degradation; CO(2) and NH(3) from urea (urease route): step 1/1. The protein is Urease subunit beta of Paraburkholderia phymatum (strain DSM 17167 / CIP 108236 / LMG 21445 / STM815) (Burkholderia phymatum).